The primary structure comprises 149 residues: METQRASLCLGRWSLWLLLLALVVPSASAQALSYREAVLRAVDRLNEQSSEANLYRLLELDQPPKADEDPGTPKPVSFTVKETVCPRPTRQPPELCDFKENGRVKQCVGTVTLDQIKDPLDITCNEVQGVRGGRLCYCRGWICFCVGRG.

Residues 1 to 29 form the signal peptide; it reads METQRASLCLGRWSLWLLLLALVVPSASA. Residues 30–130 constitute a propeptide that is removed on maturation; sequence QALSYREAVL…DITCNEVQGV (101 aa). Residues 61 to 80 are disordered; the sequence is DQPPKADEDPGTPKPVSFTV. Intrachain disulfides connect C85/C96, C107/C124, C136/C145, and C138/C143. Position 148 is an arginine amide (R148).

The protein belongs to the cathelicidin family.

The protein localises to the secreted. Functionally, microbicidal activity. In Sus scrofa (Pig), this protein is Protegrin-4 (NPG4).